The sequence spans 477 residues: Penton protein (477 aa).

This sequence belongs to the adenoviridae penton family. As to quaternary structure, interacts with the fiber protein (via N-terminal tail region). Interacts with the capsid vertex protein; this interaction binds the penton base to neighboring peripentonal hexons.

Its subcellular location is the virion. It is found in the host nucleus. Its function is as follows. Major capsid protein that self-associates to form penton base pentamers, each in the shape of a pentagon, situated at the 12 vertices of the pseudo T=25 capsid. Involved in virus secondary attachment to host cell after initial attachment by the fiber protein, and in endocytosis of virions. As the virus enters the host cell, penton proteins are shed concomitant with virion acidification in the endosome. In Canis lupus familiaris (Dog), this protein is Penton protein.